A 612-amino-acid polypeptide reads, in one-letter code: uncharacterized protein (612 aa).

Positions 39–100 (ERDHNLWEIE…KNISVKDLDE (62 aa)) form a coiled coil. Positions 219–241 (PLSSGESLPKKEEEVTKSPSFTL) are disordered. WD repeat units follow at residues 286–325 (TSTQ…NDNS), 337–376 (GHEG…TSDS), 389–432 (GHED…FKIR), 434–470 (DSKQ…LVSQ), 483–523 (AVKD…LLAE), 526–565 (ISKV…STLE), and 574–612 (EEIT…KYLP).

It localises to the cytoplasm. This is an uncharacterized protein from Schizosaccharomyces pombe (strain 972 / ATCC 24843) (Fission yeast).